Consider the following 182-residue polypeptide: Homeobox protein pnx (182 aa).

The tract at residues 1–34 is important for interaction with tle3a; it reads MHEETSNSTLQGKTSFSIADILDPAKFNGTRETR. The segment at 24–63 is disordered; it reads PAKFNGTRETREISNNRESPKTTSPTQDPSAPNIANASAA. Residues 29–43 are compositionally biased toward basic and acidic residues; sequence GTRETREISNNRESP. Over residues 52 to 63 the composition is skewed to low complexity; that stretch reads PSAPNIANASAA. Positions 67–126 form a DNA-binding region, homeobox; sequence SKRIRTAFTLDQLRILERSFQSSHYLSVFERHCIASALGLSETQVKIWFQNRRTKWKKEL.

The protein belongs to the NK-1 homeobox family. As to quaternary structure, interacts with tle3a.

It is found in the nucleus. In terms of biological role, transcriptional repressor. Activity as a repressor is enhanced by binding to the corepressor tle3a. This is Homeobox protein pnx from Danio rerio (Zebrafish).